Consider the following 2771-residue polypeptide: Teneurin-4 (2771 aa).

A compositionally biased stretch (basic and acidic residues) spans 1–22 (MDVKERKPYRSLTRRRDAERRY). The tract at residues 1 to 45 (MDVKERKPYRSLTRRRDAERRYTSSSADSEEGKGPQKSYSSSETL) is disordered. The region spanning 1 to 341 (MDVKERKPYR…KPSKYCNWKC (341 aa)) is the Teneurin N-terminal domain. Residues 1–345 (MDVKERKPYR…YCNWKCAALS (345 aa)) lie on the Cytoplasmic side of the membrane. Residue Ser-124 is modified to Phosphoserine. Positions 132–233 (WGRSTRSGRS…PPAGSAQEPT (102 aa)) are disordered. The segment covering 134-155 (RSTRSGRSSCLSSRANSNLTLT) has biased composition (low complexity). Residues 156-166 (DTEHENTETDH) are compositionally biased toward basic and acidic residues. A Phosphothreonine modification is found at Thr-178. A compositionally biased stretch (polar residues) spans 191–211 (QHHAASINSLNRGNFTPRSNP). The helical transmembrane segment at 346-366 (AILISATLVILLAYFVAMHLF) threads the bilayer. Residues 367–2771 (GLNWHLQPME…FMRQSEMGRR (2405 aa)) lie on the Extracellular side of the membrane. Residues 403–428 (SGGTGLETPDRKGKGAAEGKPSSLFP) form a disordered region. Positions 410–419 (TPDRKGKGAA) are enriched in basic and acidic residues. The N-linked (GlcNAc...) asparagine glycan is linked to Asn-469. Residues 509–528 (ARSLEGPQRQSRGPVPPSSH) are disordered. EGF-like domains are found at residues 564-595 (SVDNCPSNCYGNGDCISGTCHCFLGFLGPDCG), 596-626 (RASCPVLCSGNGQYMKGRCLCHSGWKGAECD), 628-660 (PTNQCIDVACSSHGTCIMGTCICNPGYKGESCE), 661-692 (EVDCMDPTCSSRGVCVRGECHCSVGWGGTNCE), 694-727 (PRATCLDQCSGHGTFLPDTGLCNCDPSWTGHDCS), 728-759 (IEICAADCGGHGVCVGGTCRCEDGWMGAACDQ), 760-789 (RACHPRCAEHGTCRDGKCECSPGWNGEHCT), and 790-833 (IAHY…TGCD). 22 disulfides stabilise this stretch: Cys-568/Cys-578, Cys-572/Cys-583, Cys-585/Cys-594, Cys-603/Cys-614, Cys-616/Cys-625, Cys-632/Cys-643, Cys-637/Cys-648, Cys-650/Cys-659, Cys-664/Cys-675, Cys-669/Cys-680, Cys-682/Cys-691, Cys-702/Cys-715, Cys-717/Cys-726, Cys-731/Cys-741, Cys-735/Cys-746, Cys-748/Cys-757, Cys-762/Cys-772, Cys-766/Cys-777, Cys-779/Cys-788, Cys-802/Cys-812, Cys-806/Cys-821, and Cys-823/Cys-832. Asn-942 and Asn-1261 each carry an N-linked (GlcNAc...) asparagine glycan. 5 NHL repeats span residues 1218–1261 (SCPS…PSGN), 1266–1310 (LEMR…VKST), 1336–1380 (TRCG…NGII), 1395–1446 (LSCD…VAGR), and 1525–1568 (CFSG…IRKN). Residues 1578–1597 (YELSSPIDQELYLFDTSGKH) form a YD 1 repeat. Asn-1611 is a glycosylation site (N-linked (GlcNAc...) asparagine). YD repeat units lie at residues 1614–1634 (YTGDGDITHITDNNGNMVNVR), 1677–1696 (YHGNSGLLATKSNENGWTTF), and 1697–1719 (YEYDSFGRLTNVTFPTGQVSSFR). N-linked (GlcNAc...) asparagine glycans are attached at residues Asn-1707, Asn-1743, Asn-1801, and Asn-1886. YD repeat units lie at residues 1889–1908 (YSPGGHIAGIQRGIMSERME), 1930–1948 (YLEKSMVLHLHSQRQYIFE), 1949–1969 (FDKNDRLSSVTMPNVARQTLE), 1976–1993 (YYRNIYQPPEGNASVIQD), 1994–2015 (FTEDGHLLHTFYLGTGRRVIYK), 2016–2033 (YGKLSKLAETLYDTTKVS), 2036–2056 (YDETAGMLKTVNLQNEGFTCT), 2059–2079 (YRQIGPLIDRQIFRFTEEGMV), 2087–2106 (YDNSFRVTSMQAVINETPLP), 2112–2129 (YDDVSGKTEQFGKFGVIY), 2130–2156 (YDINQIITTAVMTHTKHFDAYGRMKEV), 2158–2171 (YEIFRSLMYWMTVQ), 2172–2195 (YDNMGRVVKKELKVGPYANTTRYS), 2198–2218 (YDADGQLQTVSINDKPLWRYS), 2219–2239 (YDLNGNLHLLSPGNSARLTPL), 2241–2261 (YDLRDRITRLGDVQYKMDEDG), 2273–2293 (YNSAGLLIKAYNRASGWSVRY), and 2295–2315 (YDGLGRRVSSKSSHSHHLQFF). An N-linked (GlcNAc...) asparagine glycan is attached at Asn-1987. A glycan (N-linked (GlcNAc...) asparagine) is linked at Asn-2190. An N-linked (GlcNAc...) asparagine glycan is attached at Asn-2330. Residues 2341-2382 (YDLQGHLFAMELSSGDEFYIACDNIGTPLAVFSGTGLMIKQI) form a YD 23 repeat. Asn-2648 carries an N-linked (GlcNAc...) asparagine glycan.

It belongs to the tenascin family. Teneurin subfamily. As to quaternary structure, homodimer; disulfide-linked. May also form heterodimer with either TENM1 or TENM2 or TENM3. Expressed in brain and spinal cord (at protein level). Expressed in neurons and oligodendrocytes of the spinal cord. Expressed weakly in kidney, lung and spleen. Expressed in the cortex, CA1, CA2 and CA3 of the hippocampus. Expressed in the white matter, Purkinje cells and molecular layer of the cerebellum.

Its subcellular location is the cell membrane. The protein resides in the cell projection. The protein localises to the nucleus. It is found in the cytoplasm. Involved in neural development, regulating the establishment of proper connectivity within the nervous system. Plays a role in the establishment of the anterior-posterior axis during gastrulation. Regulates the differentiation and cellular process formation of oligodendrocytes and myelination of small-diameter axons in the central nervous system (CNS). Promotes activation of focal adhesion kinase. May function as a cellular signal transducer. This Mus musculus (Mouse) protein is Teneurin-4 (Tenm4).